Reading from the N-terminus, the 115-residue chain is Chorion protein S15 (115 aa).

The N-terminal stretch at Met-1–Ala-18 is a signal peptide.

Belongs to the chorion protein S15/S18 family.

It is found in the secreted. In terms of biological role, chorion membrane (egg shell) protein; plays a role in protecting the egg from the environment. This is Chorion protein S15 (Cp15) from Drosophila melanogaster (Fruit fly).